The sequence spans 132 residues: Small ribosomal subunit protein uS11 (132 aa).

Positions 1–21 are disordered; it reads MAAPKSAVRKPRRKDKKNIAV. Over residues 7 to 16 the composition is skewed to basic residues; the sequence is AVRKPRRKDK.

Belongs to the universal ribosomal protein uS11 family. Part of the 30S ribosomal subunit. Interacts with proteins S7 and S18. Binds to IF-3.

In terms of biological role, located on the platform of the 30S subunit, it bridges several disparate RNA helices of the 16S rRNA. Forms part of the Shine-Dalgarno cleft in the 70S ribosome. The sequence is that of Small ribosomal subunit protein uS11 from Clavibacter sepedonicus (Clavibacter michiganensis subsp. sepedonicus).